The following is a 242-amino-acid chain: Acetoacetyl-CoA reductase (242 aa).

NADP(+)-binding positions include 12-14 (RGI) and 82-86 (NAGIT). Substrate contacts are provided by residues Asp-88 and 141–144 (QAGQ). Tyr-147 functions as the Proton acceptor in the catalytic mechanism. NADP(+) is bound at residue 177–180 (PGYI). Substrate is bound at residue 178–179 (GY).

It belongs to the short-chain dehydrogenases/reductases (SDR) family.

Its subcellular location is the cytoplasm. The enzyme catalyses a (3R)-3-hydroxyacyl-CoA + NADP(+) = a 3-oxoacyl-CoA + NADPH + H(+). It participates in biopolymer metabolism; poly-(R)-3-hydroxybutanoate biosynthesis. The sequence is that of Acetoacetyl-CoA reductase (phaB) from Paracoccus denitrificans.